We begin with the raw amino-acid sequence, 142 residues long: MAP3K7 C-terminal-like protein (142 aa).

As to expression, detected in lung and peripheral blood leukocytes. Expressed predominantly in peripheral blood leukocytes and ubiquitously in adult and fetal tissues. Also expressed strongly in breast carcinoma GI-101, colon adenocarcinoma GI-112, and prostatic adenocarcinoma PC3.

The protein is MAP3K7 C-terminal-like protein (MAP3K7CL) of Homo sapiens (Human).